Reading from the N-terminus, the 437-residue chain is GTPase Obg (437 aa).

One can recognise an Obg domain in the interval 2 to 160; that stretch reads SMFLDTAKIS…RQLELELKIL (159 aa). In terms of domain architecture, OBG-type G spans 161–338; it reads ADVGLVGFPS…LLEATAELLA (178 aa). Residues 167–174, 192–196, 214–217, 284–287, and 319–321 each bind GTP; these read GFPSVGKS, FTTIV, DLPG, NKMD, and SSL. Ser174 and Thr194 together coordinate Mg(2+). The OCT domain maps to 359-437; it reads GFAEAEKEFE…IGKFEFEFVD (79 aa).

It belongs to the TRAFAC class OBG-HflX-like GTPase superfamily. OBG GTPase family. In terms of assembly, monomer. Requires Mg(2+) as cofactor.

Its subcellular location is the cytoplasm. Functionally, an essential GTPase which binds GTP, GDP and possibly (p)ppGpp with moderate affinity, with high nucleotide exchange rates and a fairly low GTP hydrolysis rate. Plays a role in control of the cell cycle, stress response, ribosome biogenesis and in those bacteria that undergo differentiation, in morphogenesis control. The sequence is that of GTPase Obg from Streptococcus pyogenes serotype M28 (strain MGAS6180).